The chain runs to 944 residues: Bifunctional glutamine synthetase adenylyltransferase/adenylyl-removing enzyme (944 aa).

The tract at residues 1-440 is adenylyl removase; that stretch reads MSANSVFQQL…IFTQLIGEDD (440 aa). Residues 448-944 form an adenylyl transferase region; that stretch reads VSEFKRLWLL…LSSKQKWLDE (497 aa).

Belongs to the GlnE family. Mg(2+) serves as cofactor.

The enzyme catalyses [glutamine synthetase]-O(4)-(5'-adenylyl)-L-tyrosine + phosphate = [glutamine synthetase]-L-tyrosine + ADP. It carries out the reaction [glutamine synthetase]-L-tyrosine + ATP = [glutamine synthetase]-O(4)-(5'-adenylyl)-L-tyrosine + diphosphate. Involved in the regulation of glutamine synthetase GlnA, a key enzyme in the process to assimilate ammonia. When cellular nitrogen levels are high, the C-terminal adenylyl transferase (AT) inactivates GlnA by covalent transfer of an adenylyl group from ATP to specific tyrosine residue of GlnA, thus reducing its activity. Conversely, when nitrogen levels are low, the N-terminal adenylyl removase (AR) activates GlnA by removing the adenylyl group by phosphorolysis, increasing its activity. The regulatory region of GlnE binds the signal transduction protein PII (GlnB) which indicates the nitrogen status of the cell. The sequence is that of Bifunctional glutamine synthetase adenylyltransferase/adenylyl-removing enzyme from Proteus mirabilis (strain HI4320).